Reading from the N-terminus, the 90-residue chain is Small ribosomal subunit protein uS15c (90 aa).

Belongs to the universal ribosomal protein uS15 family. As to quaternary structure, part of the 30S ribosomal subunit.

The protein localises to the plastid. It is found in the chloroplast. The protein is Small ribosomal subunit protein uS15c (rps15) of Citrus sinensis (Sweet orange).